Here is a 181-residue protein sequence, read N- to C-terminus: Caltractin ICL1a (181 aa).

The segment at 1–29 (MARRGQQPPPQQAPPAQKNQPGKFNPAEF) is disordered. Residues 14–23 (PPAQKNQPGK) are compositionally biased toward low complexity. 4 consecutive EF-hand domains span residues 37–72 (EEVL…LGFE), 73–108 (AKNQ…RISE), 110–145 (DSKA…LGET), and 146–181 (MDDS…KTFA). Positions 50, 52, 54, 56, 61, 86, 88, 90, 92, and 97 each coordinate Ca(2+).

This sequence belongs to the centrin family. As to quaternary structure, monomer.

It localises to the cytoplasm. The protein resides in the cytoskeleton. Functionally, plays a fundamental role in microtubule organizing center structure and function. Component of the infraciliary lattice (ICL) and the ciliary basal bodies. The sequence is that of Caltractin ICL1a (Icl1a) from Paramecium tetraurelia.